The chain runs to 227 residues: Cytochrome c oxidase subunit 2 (227 aa).

Topologically, residues 1–14 are mitochondrial intermembrane; sequence MAYPFELGFQDATS. The helical transmembrane segment at 15-45 threads the bilayer; that stretch reads PIMEELLHFHDHTLMIVFLISSLVLYIISLM. The Mitochondrial matrix portion of the chain corresponds to 46–59; the sequence is LTTKLTHTSTMDAQ. The helical transmembrane segment at 60 to 87 threads the bilayer; sequence EVETIWTILPAIILILIALPSLRILYMM. At 88–227 the chain is on the mitochondrial intermembrane side; the sequence is DEINDPSLTV…HFENWSSSML (140 aa). H161, C196, E198, C200, H204, and M207 together coordinate Cu cation. E198 provides a ligand contact to Mg(2+).

The protein belongs to the cytochrome c oxidase subunit 2 family. In terms of assembly, component of the cytochrome c oxidase (complex IV, CIV), a multisubunit enzyme composed of 14 subunits. The complex is composed of a catalytic core of 3 subunits MT-CO1, MT-CO2 and MT-CO3, encoded in the mitochondrial DNA, and 11 supernumerary subunits COX4I, COX5A, COX5B, COX6A, COX6B, COX6C, COX7A, COX7B, COX7C, COX8 and NDUFA4, which are encoded in the nuclear genome. The complex exists as a monomer or a dimer and forms supercomplexes (SCs) in the inner mitochondrial membrane with NADH-ubiquinone oxidoreductase (complex I, CI) and ubiquinol-cytochrome c oxidoreductase (cytochrome b-c1 complex, complex III, CIII), resulting in different assemblies (supercomplex SCI(1)III(2)IV(1) and megacomplex MCI(2)III(2)IV(2)). Found in a complex with TMEM177, COA6, COX18, COX20, SCO1 and SCO2. Interacts with TMEM177 in a COX20-dependent manner. Interacts with COX20. Interacts with COX16. The cofactor is Cu cation.

The protein localises to the mitochondrion inner membrane. It carries out the reaction 4 Fe(II)-[cytochrome c] + O2 + 8 H(+)(in) = 4 Fe(III)-[cytochrome c] + 2 H2O + 4 H(+)(out). Component of the cytochrome c oxidase, the last enzyme in the mitochondrial electron transport chain which drives oxidative phosphorylation. The respiratory chain contains 3 multisubunit complexes succinate dehydrogenase (complex II, CII), ubiquinol-cytochrome c oxidoreductase (cytochrome b-c1 complex, complex III, CIII) and cytochrome c oxidase (complex IV, CIV), that cooperate to transfer electrons derived from NADH and succinate to molecular oxygen, creating an electrochemical gradient over the inner membrane that drives transmembrane transport and the ATP synthase. Cytochrome c oxidase is the component of the respiratory chain that catalyzes the reduction of oxygen to water. Electrons originating from reduced cytochrome c in the intermembrane space (IMS) are transferred via the dinuclear copper A center (CU(A)) of subunit 2 and heme A of subunit 1 to the active site in subunit 1, a binuclear center (BNC) formed by heme A3 and copper B (CU(B)). The BNC reduces molecular oxygen to 2 water molecules using 4 electrons from cytochrome c in the IMS and 4 protons from the mitochondrial matrix. In Neotamias bulleri (Buller's chipmunk), this protein is Cytochrome c oxidase subunit 2 (MT-CO2).